Here is a 956-residue protein sequence, read N- to C-terminus: MDDIDSSDGAAAARAGEIGSIGVSTPWKPIQLVFKRYLPQNGSASKVHVAVKKPVVVRLTRDLVETYKICDPQFKYRGELNPKRYLTTPSVGVNNDGFDNVNYDLILAVNDDFCSSDSRQRYIVKDLLGHGTFGQVAKCWVPETNSFVAVKVIKNQLAYYQQALVEVSILTTLNKKYDPEDKNHIVRIYDYFLHQSHLCICFELLDMNLYELIKINQFRGLSLSIVKLFSKQILLGLALLKDAGIIHCDLKPENILLCASVKPTEIKIIDFGSACMEDKTVYSYIQSRYYRSPEVLLGYQYTTAIDMWSFGCIVAELFLGLPLFPGGSEFDILRRMIEILGKQPPDYVLKEAKNTNKFFKCVGSVHNLGNGGTYGGLKSAYMALTGEEFEAREKKKPEIGKEYFNHKNLEEIVKSYPYKINLPEDDVVKETQIRLALIDFLKGLMEFDPAKRWSPFQAAKHPFITGEPFTCPYNPPPETPRVHVTQNIKVDHHPGEGHWFAAGLSPHVSGRTRIPMHNSPHFQMMPYSHANSYGSIGSYGSYNDGTIQDNSYGSYGGTGNMFAYYSPVNHPGLYMQNQGGVSMLGTSPDARRRVMQYPHGNGPNGLGTSPSAGNFAPLPLGTSPSQFTPNTNNQFLAGSPGHHGPTSPVRNSCHGSPLGKMAAFSQINRRMSAGYSGGSQSQDSSLSQAQGHGMDNFYQNEGYSGQFSGSPSRRQLDSGVKNRKQTQGGTTLSTGYSTHNNANSSLRSNMYNPSSTAHHLENPDTALSVPDPGDWDPNYSDDLLLEEDSADESSLANAFSRGMQLGSTDASSYSRRFNSNASTSSSNPTTQRRYAPNQAFSQVETGSPPSNDPHARFGQHIPGSQYIPHVSQNSPSRLGQQPPQRYNHGRPNAGRTMDRNHMNAQLPPSNTNSGGQQRSPRSSSYTNGVPWGRRTNNHVPNVPSTSHGRVDYGSIA.

The region spanning 122-464 is the Protein kinase domain; that stretch reads YIVKDLLGHG…PFQAAKHPFI (343 aa). ATP is bound by residues 128–136 and lysine 151; that span reads LGHGTFGQV. Position 222 is a phosphoserine (serine 222). The active-site Proton acceptor is aspartate 249. 3 disordered regions span residues 620-657, 672-781, and 806-956; these read LGTS…HGSP, SAGY…NYSD, and GSTD…GSIA. Over residues 622–636 the composition is skewed to polar residues; that stretch reads TSPSQFTPNTNNQFL. Over residues 672-691 the composition is skewed to low complexity; that stretch reads SAGYSGGSQSQDSSLSQAQG. Composition is skewed to polar residues over residues 697–713, 725–757, and 806–817; these read FYQN…SPSR, QTQG…SSTA, and GSTDASSYSRRF. Over residues 818–830 the composition is skewed to low complexity; sequence NSNASTSSSNPTT. Composition is skewed to polar residues over residues 838 to 849, 870 to 884, and 902 to 912; these read QAFSQVETGSPP, VSQN…QPPQ, and MNAQLPPSNTN. Low complexity predominate over residues 913–924; it reads SGGQQRSPRSSS. A compositionally biased stretch (polar residues) spans 937-947; sequence NHVPNVPSTSH.

It belongs to the protein kinase superfamily. Ser/Thr protein kinase family. In terms of processing, autophosphorylated at Ser-222.

It carries out the reaction L-seryl-[protein] + ATP = O-phospho-L-seryl-[protein] + ADP + H(+). It catalyses the reaction L-threonyl-[protein] + ATP = O-phospho-L-threonyl-[protein] + ADP + H(+). The enzyme catalyses L-tyrosyl-[protein] + ATP = O-phospho-L-tyrosyl-[protein] + ADP + H(+). Its function is as follows. Dual specificity protein kinase that phosphorylates ANN1, ANN2 and CP29B at serine and threonine residues, and ANN1, ANN2 and ANN4 at tyrosine residues. May regulate the phosphorylation status of annexin proteins. Acts as a positive regulator in abscisic acid (ABA)-mediated regulation of postgermination growth and drought response. May regulate the expression of ABA-responsive genes such as RD22, RD29A, LTI65/RD29B and RAB18. This Arabidopsis thaliana (Mouse-ear cress) protein is Dual specificity protein kinase YAK1 homolog.